A 117-amino-acid polypeptide reads, in one-letter code: uncharacterized protein (117 aa).

Positions 96–117 (RKGGASKHRTLSAETGIRGEGE) are disordered.

This is an uncharacterized protein from Saccharomyces cerevisiae (strain ATCC 204508 / S288c) (Baker's yeast).